Consider the following 684-residue polypeptide: UvrABC system protein B (684 aa).

Residues 32 to 420 (DGVLRGDRWQ…GGVVVEQLIR (389 aa)) form the Helicase ATP-binding domain. Residue 45 to 52 (GVTGSGKT) coordinates ATP. The Beta-hairpin signature appears at 98–121 (YYDFYQPEAYIPSLDKYIAKDLKI). Residues 437 to 603 (QIDHLLARIR…SIIKSVDQVL (167 aa)) form the Helicase C-terminal domain. Positions 643-678 (MLMVAEMNAEMQKAAEQTDYEKAAYLRDEILMLQER) constitute a UVR domain.

It belongs to the UvrB family. In terms of assembly, forms a heterotetramer with UvrA during the search for lesions. Interacts with UvrC in an incision complex.

It localises to the cytoplasm. Its function is as follows. The UvrABC repair system catalyzes the recognition and processing of DNA lesions. A damage recognition complex composed of 2 UvrA and 2 UvrB subunits scans DNA for abnormalities. Upon binding of the UvrA(2)B(2) complex to a putative damaged site, the DNA wraps around one UvrB monomer. DNA wrap is dependent on ATP binding by UvrB and probably causes local melting of the DNA helix, facilitating insertion of UvrB beta-hairpin between the DNA strands. Then UvrB probes one DNA strand for the presence of a lesion. If a lesion is found the UvrA subunits dissociate and the UvrB-DNA preincision complex is formed. This complex is subsequently bound by UvrC and the second UvrB is released. If no lesion is found, the DNA wraps around the other UvrB subunit that will check the other stand for damage. This is UvrABC system protein B from Chlorobaculum tepidum (strain ATCC 49652 / DSM 12025 / NBRC 103806 / TLS) (Chlorobium tepidum).